The following is a 287-amino-acid chain: NAD kinase (287 aa).

Catalysis depends on Asp-56, which acts as the Proton acceptor. NAD(+) is bound by residues 56–57 (DG), Arg-61, 128–129 (ND), and Asp-156.

It belongs to the NAD kinase family. The cofactor is a divalent metal cation.

The protein localises to the cytoplasm. It carries out the reaction NAD(+) + ATP = ADP + NADP(+) + H(+). Functionally, involved in the regulation of the intracellular balance of NAD and NADP, and is a key enzyme in the biosynthesis of NADP. Catalyzes specifically the phosphorylation on 2'-hydroxyl of the adenosine moiety of NAD to yield NADP. The sequence is that of NAD kinase from Thermomicrobium roseum (strain ATCC 27502 / DSM 5159 / P-2).